The sequence spans 215 residues: MTPFTQHTGLVAPLDRANVDTDQIIPKQFLKSIKRTGFGPNLFDEWRYLDIGEPGRDNSTRPLNPEFVLNFPRYQGASVLLARENFGCGSSREHAPWALDEYGFRAVIAPSFADIFYNNSFKNGLLPIVLAEAEVDALFEQCLANEGYQLTVDLAAQRVRRPDGVEYSFDIDAFRKHCLLNGLDDIGLTLQEADAIGRFEQDHRARQPWLFGALQ.

The protein belongs to the LeuD family. LeuD type 1 subfamily. Heterodimer of LeuC and LeuD.

It catalyses the reaction (2R,3S)-3-isopropylmalate = (2S)-2-isopropylmalate. Its pathway is amino-acid biosynthesis; L-leucine biosynthesis; L-leucine from 3-methyl-2-oxobutanoate: step 2/4. Its function is as follows. Catalyzes the isomerization between 2-isopropylmalate and 3-isopropylmalate, via the formation of 2-isopropylmaleate. The polypeptide is 3-isopropylmalate dehydratase small subunit (Xanthomonas oryzae pv. oryzae (strain MAFF 311018)).